We begin with the raw amino-acid sequence, 413 residues long: Serine hydroxymethyltransferase (413 aa).

(6S)-5,6,7,8-tetrahydrofolate-binding positions include Leu-119 and 123-125 (GHL). Position 228 is an N6-(pyridoxal phosphate)lysine (Lys-228). Residue 351-353 (SPF) participates in (6S)-5,6,7,8-tetrahydrofolate binding.

It belongs to the SHMT family. In terms of assembly, homodimer. Requires pyridoxal 5'-phosphate as cofactor.

The protein localises to the cytoplasm. The catalysed reaction is (6R)-5,10-methylene-5,6,7,8-tetrahydrofolate + glycine + H2O = (6S)-5,6,7,8-tetrahydrofolate + L-serine. It functions in the pathway one-carbon metabolism; tetrahydrofolate interconversion. Its pathway is amino-acid biosynthesis; glycine biosynthesis; glycine from L-serine: step 1/1. In terms of biological role, catalyzes the reversible interconversion of serine and glycine with tetrahydrofolate (THF) serving as the one-carbon carrier. This reaction serves as the major source of one-carbon groups required for the biosynthesis of purines, thymidylate, methionine, and other important biomolecules. Also exhibits THF-independent aldolase activity toward beta-hydroxyamino acids, producing glycine and aldehydes, via a retro-aldol mechanism. The chain is Serine hydroxymethyltransferase from Lysinibacillus sphaericus (strain C3-41).